A 122-amino-acid chain; its full sequence is Basic phospholipase A2 homolog myotoxin II (122 aa).

Disulfide bonds link C26–C116, C28–C44, C43–C95, C49–C122, C50–C88, C57–C81, and C75–C86. The important for membrane-damaging activities in eukaryotes and bacteria; heparin-binding stretch occupies residues 105-118 (KKYRYNYLKPFCKK).

It belongs to the phospholipase A2 family. Group II subfamily. K49 sub-subfamily. As to quaternary structure, homodimer; non-covalently linked (probable alternative/compact dimer conformation). In terms of tissue distribution, expressed by the venom gland.

The protein resides in the secreted. Its activity is regulated as follows. Myotoxic activity is inhibited by suramin and rosmarinic acid. Cytotoxic and myotoxic activities are inhibited by pre-incubation with varespladib. Suramin inhibits this myotoxin by (i) direct blockage of the MDoS and MDiS, preventing the toxin/membrane interaction and disruption and (ii) formation of an oligomeric complex, resulting in a tetrameric configuration for which both MDoS and MDiS becomes physically inaccessible, thus avoiding any possibility of toxin-membrane interaction or disruption. Heparin completely inhibits the cytotoxic and bactericidal activities, but only partially the myotoxic, edema-inducing and lethal effects. In terms of biological role, snake venom phospholipase A2 (PLA2) homolog that lacks enzymatic activity. Shows high myotoxin activities. Also shows neurotoxicity, since it induces muscle paralysis when tested on mouse phrenic-diaphragm preparations. Displays edema-inducing activities. Also displays antimicrobial activity against E.coli and C.albicans, as well as antitumoral activity against some human and mice cell lines. In addition, it is effective as parasiticidal agent against Leishmania sp. and S.mansoni. It also disrupts negatively charged liposomes in a dose- and temperature-dependent manner and shows toxicity by intraperitoneal route. In contrast to other phospholipase A2-like toxins, this myotoxin does not require fatty acid binding to be active. This Bothrops moojeni (Lance-headed viper) protein is Basic phospholipase A2 homolog myotoxin II.